The following is a 445-amino-acid chain: GTPase Der (445 aa).

EngA-type G domains are found at residues 3–167 (PVIA…YAGQ) and 180–353 (IKIA…AAAM). GTP-binding positions include 9–16 (GRPNVGKS), 56–60 (DTGGF), 119–122 (NKAE), 186–193 (GRPNVGKS), 233–237 (DTAGL), and 298–301 (NKWD). The region spanning 354–438 (AKLPTPKLTR…PLRIEFRSSN (85 aa)) is the KH-like domain.

The protein belongs to the TRAFAC class TrmE-Era-EngA-EngB-Septin-like GTPase superfamily. EngA (Der) GTPase family. In terms of assembly, associates with the 50S ribosomal subunit.

Its function is as follows. GTPase that plays an essential role in the late steps of ribosome biogenesis. The chain is GTPase Der from Burkholderia ambifaria (strain MC40-6).